We begin with the raw amino-acid sequence, 588 residues long: Cryptochrome-1 (588 aa).

A Photolyase/cryptochrome alpha/beta domain is found at 3–132 (VNAVHWFRKG…EVIVRISHTL (130 aa)). Lysine 11 is covalently cross-linked (Glycyl lysine isopeptide (Lys-Gly) (interchain with G-Cter in ubiquitin)). The LIR 1 signature appears at 50–54 (NRWRF). Position 71 is a phosphoserine; by AMPK (serine 71). The LIR 2 signature appears at 82–87 (DVFPRL). Residue lysine 107 forms a Glycyl lysine isopeptide (Lys-Gly) (interchain with G-Cter in ubiquitin) linkage. Positions 151–156 (KRFQTL) match the LIR 3 motif. Lysine 159 is covalently cross-linked (Glycyl lysine isopeptide (Lys-Gly) (interchain with G-Cter in ubiquitin)). Serine 247 carries the post-translational modification Phosphoserine; by MAPK. Serine 252 provides a ligand contact to FAD. 2 consecutive short sequence motifs (LIR) follow at residues 255–260 (LRFGCL) and 271–276 (DLYKKV). A Phosphoserine; by AMPK modification is found at serine 280. The short motif at 285–290 (SLYGQL) is the LIR 6 element. FAD is bound at residue glutamine 289. Lysine 329 is covalently cross-linked (Glycyl lysine isopeptide (Lys-Gly) (interchain with G-Cter in ubiquitin)). The short motif at 335–339 (TGFPW) is the LIR 7 element. Histidine 355 lines the FAD pocket. Residues 371-470 (WISWEEGMKV…LIGVNYPKPM (100 aa)) are required for inhibition of CLOCK-BMAL1-mediated transcription. Residues 379–384 (KVFEEL) carry the LIR 8 motif. 387–389 (DAD) serves as a coordination point for FAD. Short sequence motifs (LIR) lie at residues 395-400 (GSWMWL), 411-416 (HCYCPV), and 430-435 (RRYLPV). An interaction with TIMELESS region spans residues 471–493 (VNHAEASRLNIERMKQIYQQLSR). Residue lysine 485 forms a Glycyl lysine isopeptide (Lys-Gly) (interchain with G-Cter in ubiquitin) linkage. 2 consecutive short sequence motifs (LIR) follow at residues 486 to 491 (QIYQQL) and 492 to 497 (SRYRGL). The tract at residues 511–588 (GGLMGYAPGE…GPKVQRQSSN (78 aa)) is disordered. The span at 545-568 (DSQQTNPLKQGRSSMGTGLSSGKR) shows a compositional bias: polar residues. Lysine 567 is covalently cross-linked (Glycyl lysine isopeptide (Lys-Gly) (interchain with G-Cter in ubiquitin)). A Phosphoserine modification is found at serine 570.

This sequence belongs to the DNA photolyase class-1 family. Component of the circadian core oscillator, which includes the CRY proteins, CLOCK or NPAS2, BMAL1 or BMAL2, CSNK1D and/or CSNK1E, TIMELESS, and the PER proteins. Interacts directly with TIMELESS. Interacts directly with PER1, PER2 and PER3; interaction with PER2 inhibits its ubiquitination and vice versa. Interacts with FBXL21. Interacts with FBXL3. Interacts with CLOCK-BMAL1 independently of PER2 and DNA. Interacts with HDAC1, HDAC2 and SIN3B. Interacts with nuclear receptors AR, NR1D1, NR3C1/GR, RORA and RORC; the interaction with at least NR3C1/GR is ligand dependent. Interacts with PRKDC. Interacts with the G protein subunit alpha GNAS; the interaction may block GPCR-mediated regulation of cAMP concentrations. Interacts with PRMT5. Interacts with EZH2. Interacts with MYBBP1A, DOCK7, HNRNPU, RPL7A, RPL8 and RPS3. Interacts with PPP5C (via TPR repeats). Interacts with MAP1LC3B. Interacts with CLOCK. Interacts with BMAL1. Interacts weakly with HDAC3; this interaction is enhanced in the presence of FBXL3. Interacts with TRIM28, KCTD5 and DDB1. Interacts with FOXO1. Interacts with DTL and DDB1-CUL4A complex. Interacts with HNF4A. Interacts with PSMD2 in a KDM8-dependent manner. Interacts with KDM8 in a FBXL3-dependent manner. Interacts with PPARG in a ligand-dependent manner. Interacts with PPARD (via domain NR LBD) and NR1I2 (via domain NR LBD) in a ligand-dependent manner. Interacts with PPARA, NR1I3 and VDR. It depends on FAD as a cofactor. The cofactor is (6R)-5,10-methylene-5,6,7,8-tetrahydrofolate. Phosphorylation on Ser-247 by MAPK is important for the inhibition of CLOCK-BMAL1-mediated transcriptional activity. Phosphorylation by CSNK1E requires interaction with PER1 or PER2. Phosphorylation at Ser-71 and Ser-280 by AMPK decreases protein stability. Phosphorylation at Ser-570 exhibits a robust circadian rhythm with a peak at CT8, increases protein stability, prevents SCF(FBXL3)-mediated degradation and is antagonized by interaction with PRKDC. In terms of processing, ubiquitinated by the SCF(FBXL3) and SCF(FBXL21) complexes, regulating the balance between degradation and stabilization. The SCF(FBXL3) complex is mainly nuclear and mediates ubiquitination and subsequent degradation of CRY1. In contrast, cytoplasmic SCF(FBXL21) complex-mediated ubiquitination leads to stabilize CRY1 and counteract the activity of the SCF(FBXL3) complex. The SCF(FBXL3) and SCF(FBXL21) complexes probably mediate ubiquitination at different Lys residues. Ubiquitination at Lys-11 and Lys-107 are specifically ubiquitinated by the SCF(FBXL21) complex but not by the SCF(FBXL3) complex. Ubiquitination may be inhibited by PER2. Deubiquitinated by USP7. Post-translationally, undergoes autophagy-mediated degradation in the liver in a time-dependent manner. Autophagic degradation of CRY1 (an inhibitor of gluconeogenesis) occurs during periods of reduced feeding allowing induction of gluconeogenesis and maintenance of blood glucose levels.

The protein localises to the cytoplasm. It localises to the nucleus. Functionally, transcriptional repressor which forms a core component of the circadian clock. The circadian clock, an internal time-keeping system, regulates various physiological processes through the generation of approximately 24 hour circadian rhythms in gene expression, which are translated into rhythms in metabolism and behavior. It is derived from the Latin roots 'circa' (about) and 'diem' (day) and acts as an important regulator of a wide array of physiological functions including metabolism, sleep, body temperature, blood pressure, endocrine, immune, cardiovascular, and renal function. Consists of two major components: the central clock, residing in the suprachiasmatic nucleus (SCN) of the brain, and the peripheral clocks that are present in nearly every tissue and organ system. Both the central and peripheral clocks can be reset by environmental cues, also known as Zeitgebers (German for 'timegivers'). The predominant Zeitgeber for the central clock is light, which is sensed by retina and signals directly to the SCN. The central clock entrains the peripheral clocks through neuronal and hormonal signals, body temperature and feeding-related cues, aligning all clocks with the external light/dark cycle. Circadian rhythms allow an organism to achieve temporal homeostasis with its environment at the molecular level by regulating gene expression to create a peak of protein expression once every 24 hours to control when a particular physiological process is most active with respect to the solar day. Transcription and translation of core clock components (CLOCK, NPAS2, BMAL1, BMAL2, PER1, PER2, PER3, CRY1 and CRY2) plays a critical role in rhythm generation, whereas delays imposed by post-translational modifications (PTMs) are important for determining the period (tau) of the rhythms (tau refers to the period of a rhythm and is the length, in time, of one complete cycle). A diurnal rhythm is synchronized with the day/night cycle, while the ultradian and infradian rhythms have a period shorter and longer than 24 hours, respectively. Disruptions in the circadian rhythms contribute to the pathology of cardiovascular diseases, cancer, metabolic syndromes and aging. A transcription/translation feedback loop (TTFL) forms the core of the molecular circadian clock mechanism. Transcription factors, CLOCK or NPAS2 and BMAL1 or BMAL2, form the positive limb of the feedback loop, act in the form of a heterodimer and activate the transcription of core clock genes and clock-controlled genes (involved in key metabolic processes), harboring E-box elements (5'-CACGTG-3') within their promoters. The core clock genes: PER1/2/3 and CRY1/2 which are transcriptional repressors form the negative limb of the feedback loop and interact with the CLOCK|NPAS2-BMAL1|BMAL2 heterodimer inhibiting its activity and thereby negatively regulating their own expression. This heterodimer also activates nuclear receptors NR1D1/2 and RORA/B/G, which form a second feedback loop and which activate and repress BMAL1 transcription, respectively. CRY1 and CRY2 have redundant functions but also differential and selective contributions at least in defining the pace of the SCN circadian clock and its circadian transcriptional outputs. More potent transcriptional repressor in cerebellum and liver than CRY2, though more effective in lengthening the period of the SCN oscillator. On its side, CRY2 seems to play a critical role in tuning SCN circadian period by opposing the action of CRY1. With CRY2, is dispensable for circadian rhythm generation but necessary for the development of intercellular networks for rhythm synchrony. Capable of translocating circadian clock core proteins such as PER proteins to the nucleus. Interacts with CLOCK-BMAL1 independently of PER proteins and is found at CLOCK-BMAL1-bound sites, suggesting that CRY may act as a molecular gatekeeper to maintain CLOCK-BMAL1 in a poised and repressed state until the proper time for transcriptional activation. Represses the CLOCK-BMAL1 induced transcription of BHLHE40/DEC1, ATF4, MTA1, KLF10 and NAMPT. May repress circadian target genes expression in collaboration with HDAC1 and HDAC2 through histone deacetylation. Mediates the clock-control activation of ATR and modulates ATR-mediated DNA damage checkpoint. In liver, mediates circadian regulation of cAMP signaling and gluconeogenesis by binding to membrane-coupled G proteins and blocking glucagon-mediated increases in intracellular cAMP concentrations and CREB1 phosphorylation. Inhibits hepatic gluconeogenesis by decreasing nuclear FOXO1 levels that down-regulates gluconeogenic gene expression. Besides its role in the maintenance of the circadian clock, is also involved in the regulation of other processes. Represses glucocorticoid receptor NR3C1/GR-induced transcriptional activity by binding to glucocorticoid response elements (GREs). Plays a key role in glucose and lipid metabolism modulation, in part, through the transcriptional regulation of genes involved in these pathways, such as LEP or ACSL4. Represses PPARD and its target genes in the skeletal muscle and limits exercise capacity. Plays an essential role in the generation of circadian rhythms in the retina. Represses the transcriptional activity of NR1I2. The polypeptide is Cryptochrome-1 (Cry1) (Rattus norvegicus (Rat)).